The following is a 491-amino-acid chain: Cobyric acid synthase (491 aa).

The 177-residue stretch at 253–429 (ARRVAVIRLP…WHGALEGDEL (177 aa)) folds into the GATase cobBQ-type domain. Cys334 functions as the Nucleophile in the catalytic mechanism. Residue His421 is part of the active site.

The protein belongs to the CobB/CobQ family. CobQ subfamily.

Its pathway is cofactor biosynthesis; adenosylcobalamin biosynthesis. Functionally, catalyzes amidations at positions B, D, E, and G on adenosylcobyrinic A,C-diamide. NH(2) groups are provided by glutamine, and one molecule of ATP is hydrogenolyzed for each amidation. In Mycolicibacterium gilvum (strain PYR-GCK) (Mycobacterium gilvum (strain PYR-GCK)), this protein is Cobyric acid synthase.